The chain runs to 106 residues: Diptericin A (106 aa).

The first 19 residues, 1–19 (MQFTIAVALLCCAIASTLA), serve as a signal peptide directing secretion. Residues 20–23 (YPMP) constitute a propeptide, removed by a dipeptidylpeptidase.

It belongs to the attacin/sarcotoxin-2 family.

Its subcellular location is the secreted. Its function is as follows. Antimicrobial peptide required to resist Gram-negative bacterial infections, regulated by Dredd. The chain is Diptericin A from Drosophila melanogaster (Fruit fly).